A 197-amino-acid polypeptide reads, in one-letter code: dITP/XTP pyrophosphatase (197 aa).

7–12 (TGNEQK) is a substrate binding site. Mg(2+) contacts are provided by glutamate 44 and aspartate 73. Aspartate 73 (proton acceptor) is an active-site residue. Residues threonine 74, 156–159 (FGYD), lysine 179, and 184–185 (HR) each bind substrate.

This sequence belongs to the HAM1 NTPase family. In terms of assembly, homodimer. Requires Mg(2+) as cofactor.

The catalysed reaction is XTP + H2O = XMP + diphosphate + H(+). It catalyses the reaction dITP + H2O = dIMP + diphosphate + H(+). The enzyme catalyses ITP + H2O = IMP + diphosphate + H(+). In terms of biological role, pyrophosphatase that catalyzes the hydrolysis of nucleoside triphosphates to their monophosphate derivatives, with a high preference for the non-canonical purine nucleotides XTP (xanthosine triphosphate), dITP (deoxyinosine triphosphate) and ITP. Seems to function as a house-cleaning enzyme that removes non-canonical purine nucleotides from the nucleotide pool, thus preventing their incorporation into DNA/RNA and avoiding chromosomal lesions. The protein is dITP/XTP pyrophosphatase of Elusimicrobium minutum (strain Pei191).